Here is a 310-residue protein sequence, read N- to C-terminus: Putative S-adenosyl-L-methionine-dependent methyltransferase MAB_4587c (310 aa).

S-adenosyl-L-methionine-binding positions include D126 and 155–156; that span reads DL.

Belongs to the UPF0677 family.

Its function is as follows. Exhibits S-adenosyl-L-methionine-dependent methyltransferase activity. This is Putative S-adenosyl-L-methionine-dependent methyltransferase MAB_4587c from Mycobacteroides abscessus (strain ATCC 19977 / DSM 44196 / CCUG 20993 / CIP 104536 / JCM 13569 / NCTC 13031 / TMC 1543 / L948) (Mycobacterium abscessus).